An 85-amino-acid chain; its full sequence is Anti-neuroexcitation peptide 3 (85 aa).

A signal peptide spans 1-21 (MKLSLLLVISASMLIDGLVNA). The LCN-type CS-alpha/beta domain occupies 22–82 (DGYIRGSNGC…TWKSESNTCG (61 aa)). Intrachain disulfides connect Cys-31–Cys-81, Cys-35–Cys-56, Cys-42–Cys-63, and Cys-46–Cys-65.

It belongs to the long (4 C-C) scorpion toxin superfamily. Sodium channel inhibitor family. Beta subfamily. As to expression, expressed by the venom gland.

It localises to the secreted. Functionally, binds to sodium channels (Nav) and inhibits them. Recombinant ANEP delays the convulsion seizure of model animals by 18% and shows anti-neuroexcitatory activity. The sequence is that of Anti-neuroexcitation peptide 3 from Olivierus martensii (Manchurian scorpion).